Here is a 161-residue protein sequence, read N- to C-terminus: Phosphopantetheine adenylyltransferase (161 aa).

Position 8 (Ser8) interacts with substrate. Residues 8–9 (SF) and His16 contribute to the ATP site. Positions 40, 72, and 86 each coordinate substrate. Residues 87–89 (GLR), Glu97, and 122–128 (FSFVSSS) contribute to the ATP site.

The protein belongs to the bacterial CoaD family. Homohexamer. Mg(2+) is required as a cofactor.

Its subcellular location is the cytoplasm. The catalysed reaction is (R)-4'-phosphopantetheine + ATP + H(+) = 3'-dephospho-CoA + diphosphate. It participates in cofactor biosynthesis; coenzyme A biosynthesis; CoA from (R)-pantothenate: step 4/5. Its function is as follows. Reversibly transfers an adenylyl group from ATP to 4'-phosphopantetheine, yielding dephospho-CoA (dPCoA) and pyrophosphate. The chain is Phosphopantetheine adenylyltransferase from Thermotoga neapolitana (strain ATCC 49049 / DSM 4359 / NBRC 107923 / NS-E).